We begin with the raw amino-acid sequence, 929 residues long: MAYQSEYALENEMMNQLEQLGYERVTIRDNKQLLDNFRTILNERHADKLEGNPLTDKEFQRLLTMIDGKSIFESARILRDKLPLRRDDESEIYLSFLDTKSWCKNKFQVTNQVSVEDTYKARYDVTILINGLPLVQVELKRRGIDINEAFNQVKRYRKQNYTGLFRYIQMFIISNGVETRYFSNNDSELLKSHMFYWSDKQNNRINTLQSFAESFMRPCQLAKMISRYMIINETDRILMAMRPYQVYAVEALIQQATETGNNGYVWHTTGSGKTLTSFKASQILSQQDDIKKVIFLVDRKDLDSQTEEEFNKFAKGAVDKTFNTSQLVRQLNDKSLPLIVTTIQKMAKAIQGNAPLLEQYKTNKVVFIIDECHRSQFGDMHRLVKQHFKNAQYFGFTGTPRFPENSSQDGRTTADIFGRCLHTYLIRDAIHDGNVLGFSVDYINTFKNKALKAEDNSMVEAIDTEEVWLADKRVELVTRHIINNHDKYTRNRQYSSIFTVQSIHALIKYYETFKRLNKKLEQPLTIAGIFTFKPNEDDRDGEVPYHSREKLEIMISDYNKKFETNFSTDTTNEYFNHISKNVKKGVKDSKIDILIVVNMFLTGFDSKVLNTLYVDKNLMYHDLIQAYSRTNRVEKESKPFGKIVNYRDLKKETDDALRVFSQTNDTDTILMRSYEEYKKEFMDAYRELKMIVPTPHMVDDIQDEEELKRFVEAYRLLAKIILRLKAFDEFEFTIDEIGMDEQENEDYKSKYLAVYDQVKRATAEKNKVSILNDIDFEIEMMRNDTINVNYIMNILRQIDLEDKAEQRRNQEQIRRILDHADDPTLRLKRDLIREFIDNVVPSLNKDDDIDQEYVNFESIKKEAEFKGFAGERSIDEQALKTISNDYQYSGVVNPHHLKKMIGDLPLKEKRKARKAIESFVAETTEKYGV.

In terms of domain architecture, Helicase ATP-binding spans 254-418 (QQATETGNNG…DGRTTADIFG (165 aa)). 268–274 (TTGSGKT) contributes to the ATP binding site.

The protein belongs to the HsdR family. As to quaternary structure, the type I restriction/modification system is composed of three polypeptides R, M and S.

It catalyses the reaction Endonucleolytic cleavage of DNA to give random double-stranded fragments with terminal 5'-phosphates, ATP is simultaneously hydrolyzed.. Its function is as follows. The restriction (R) subunit of a type I restriction enzyme that recognizes an undetermined sequence and cleaves a random distance away. Subunit R is required for both nuclease and ATPase activities, but not for modification. After locating a non-methylated recognition site, the enzyme complex serves as a molecular motor that translocates DNA in an ATP-dependent manner until a collision occurs that triggers cleavage. This chain is Type I restriction enzyme SauCOLORF180P endonuclease subunit, found in Staphylococcus aureus (strain COL).